Consider the following 475-residue polypeptide: Protein ABCI7, chloroplastic (475 aa).

The N-terminal 36 residues, 1–36, are a transit peptide targeting the chloroplast; that stretch reads MAAATVLGRLSLIPNLSSKPKLKSNRRTTSTSVSVR.

Interacts with NAP7.

It is found in the plastid. Its subcellular location is the chloroplast. In Arabidopsis thaliana (Mouse-ear cress), this protein is Protein ABCI7, chloroplastic (ABCI7).